Reading from the N-terminus, the 318-residue chain is Ribosome biogenesis protein RLP7 (318 aa).

2 disordered regions span residues 1–49 and 101–121; these read MSQP…NRFV and AGSKATSESELQDVDEEDEED. Basic and acidic residues predominate over residues 19–40; sequence ADRTRLEKQELAKKRKEQEEKQ. Residues 110–121 are compositionally biased toward acidic residues; it reads ELQDVDEEDEED.

The protein belongs to the universal ribosomal protein uL30 family.

It is found in the nucleus. It localises to the nucleolus. Functionally, involved in the biogenesis of the 60S ribosomal subunit. May act as a specificity factor that binds precursor rRNAs and tethers the enzymes that carry out the early 5' to 3' exonucleolytic reactions that generate the mature rRNAs. This chain is Ribosome biogenesis protein RLP7 (RLP7), found in Kluyveromyces lactis (strain ATCC 8585 / CBS 2359 / DSM 70799 / NBRC 1267 / NRRL Y-1140 / WM37) (Yeast).